The chain runs to 385 residues: Cell division protein FtsZ (385 aa).

GTP is bound by residues 37–41, 125–127, Glu156, Lys160, and Asp204; these read GGGSN and GTG.

This sequence belongs to the FtsZ family. Homodimer. Polymerizes to form a dynamic ring structure in a strictly GTP-dependent manner. Interacts directly with several other division proteins.

The protein resides in the cytoplasm. In terms of biological role, essential cell division protein that forms a contractile ring structure (Z ring) at the future cell division site. The regulation of the ring assembly controls the timing and the location of cell division. One of the functions of the FtsZ ring is to recruit other cell division proteins to the septum to produce a new cell wall between the dividing cells. Binds GTP and shows GTPase activity. This Helicobacter pylori (strain J99 / ATCC 700824) (Campylobacter pylori J99) protein is Cell division protein FtsZ.